The following is a 362-amino-acid chain: Probable aromatic amino acid hydroxylase (362 aa).

Positions 200 and 205 each coordinate Fe cation.

Belongs to the biopterin-dependent aromatic amino acid hydroxylase family. Requires Fe(2+) as cofactor.

This is Probable aromatic amino acid hydroxylase from Chlamydia pneumoniae (Chlamydophila pneumoniae).